The following is a 356-amino-acid chain: Neutral protease 2 homolog MEP5 (356 aa).

A signal peptide spans 1 to 19; the sequence is MRVSSSLIALAALAVQALA. A propeptide spanning residues 20–179 is cleaved from the precursor; the sequence is LPVNELAERD…ASAIPELDKR (160 aa). 2 disulfides stabilise this stretch: C187–C259 and C266–C284. H308 provides a ligand contact to Zn(2+). E309 is a catalytic residue. The Zn(2+) site is built by H312 and D323.

This sequence belongs to the peptidase M35 family. Zn(2+) serves as cofactor.

It localises to the secreted. The enzyme catalyses Preferential cleavage of bonds with hydrophobic residues in P1'. Also 3-Asn-|-Gln-4 and 8-Gly-|-Ser-9 bonds in insulin B chain.. In terms of biological role, secreted metalloproteinase that allows assimilation of proteinaceous substrates. Shows high activities on basic nuclear substrates such as histone and protamine. May be involved in virulence. In Coccidioides posadasii (strain C735) (Valley fever fungus), this protein is Neutral protease 2 homolog MEP5 (MEP5).